A 134-amino-acid chain; its full sequence is UPF0412 protein YaaI (134 aa).

Residues 1-23 form the signal peptide; sequence MKSVFTLSASLAISLLLCCTAQA.

It belongs to the UPF0412 family.

The polypeptide is UPF0412 protein YaaI (Escherichia coli (strain SMS-3-5 / SECEC)).